Reading from the N-terminus, the 193-residue chain is Biphenyl dioxygenase subunit beta (193 aa).

Belongs to the bacterial ring-hydroxylating dioxygenase beta subunit family. Heterohexamer consisting of 3 BphA1 subunits and 3 BphA2 subunits. A ferredoxin (BphA3) and a ferredoxin reductase (BphA4) must be present to obtain activity.

The catalysed reaction is biphenyl + NADH + O2 + H(+) = (2R,3S)-3-phenylcyclohexa-3,5-diene-1,2-diol + NAD(+). The protein operates within xenobiotic degradation; biphenyl degradation; 2-hydroxy-2,4-pentadienoate and benzoate from biphenyl: step 1/4. The beta subunit may be responsible for the substrate specificity of the enzyme. The chain is Biphenyl dioxygenase subunit beta (bphA2) from Pseudomonas sp. (strain KKS102).